A 127-amino-acid chain; its full sequence is Large ribosomal subunit protein mL55 (127 aa).

The N-terminal 32 residues, 1–32 (MPLAILLSLLRHCGVRAALPTPRHLHTSPWRA), are a transit peptide targeting the mitochondrion. Ser84 carries the phosphoserine modification.

It belongs to the mitochondrion-specific ribosomal protein mL55 family. As to quaternary structure, component of the mitochondrial ribosome large subunit (39S) which comprises a 16S rRNA and about 50 distinct proteins.

It localises to the mitochondrion. The protein is Large ribosomal subunit protein mL55 (Mrpl55) of Mus musculus (Mouse).